The chain runs to 223 residues: DNA mismatch repair protein MutH (223 aa).

Belongs to the MutH family.

The protein resides in the cytoplasm. Its function is as follows. Sequence-specific endonuclease that cleaves unmethylated GATC sequences. It is involved in DNA mismatch repair. This Haemophilus influenzae (strain ATCC 51907 / DSM 11121 / KW20 / Rd) protein is DNA mismatch repair protein MutH.